The chain runs to 225 residues: Holliday junction branch migration complex subunit RuvA (225 aa).

Positions 1 to 71 (MISWINGDLV…EDSDLLFGFT (71 aa)) are domain I. Residues 72–150 (SKDQKNFFIE…SEILSEEEKS (79 aa)) form a domain II region. The flexible linker stretch occupies residues 151 to 161 (KDEFEIKDPEI). Positions 161–225 (IIKMIEDLQL…LDEDSSNKDR (65 aa)) are domain III.

This sequence belongs to the RuvA family. As to quaternary structure, homotetramer. Forms an RuvA(8)-RuvB(12)-Holliday junction (HJ) complex. HJ DNA is sandwiched between 2 RuvA tetramers; dsDNA enters through RuvA and exits via RuvB. An RuvB hexamer assembles on each DNA strand where it exits the tetramer. Each RuvB hexamer is contacted by two RuvA subunits (via domain III) on 2 adjacent RuvB subunits; this complex drives branch migration. In the full resolvosome a probable DNA-RuvA(4)-RuvB(12)-RuvC(2) complex forms which resolves the HJ.

It localises to the cytoplasm. Its function is as follows. The RuvA-RuvB-RuvC complex processes Holliday junction (HJ) DNA during genetic recombination and DNA repair, while the RuvA-RuvB complex plays an important role in the rescue of blocked DNA replication forks via replication fork reversal (RFR). RuvA specifically binds to HJ cruciform DNA, conferring on it an open structure. The RuvB hexamer acts as an ATP-dependent pump, pulling dsDNA into and through the RuvAB complex. HJ branch migration allows RuvC to scan DNA until it finds its consensus sequence, where it cleaves and resolves the cruciform DNA. This Prochlorococcus marinus (strain AS9601) protein is Holliday junction branch migration complex subunit RuvA.